The primary structure comprises 393 residues: Nuclear hormone receptor family member nhr-90 (393 aa).

Residues 6 to 79 (LQTCKICGAE…AGMKIEYFQH (74 aa)) constitute a DNA-binding region (nuclear receptor). The NR C4-type zinc finger occupies 9–30 (CKICGAENTRGNHFGVQCCRAC). The NR C4-type; degenerate zinc finger occupies 47–62 (CLSVHCGEAARFCKPC). Residues 121 to 388 (DLNSLVGKAS…FSHPEMFIDT (268 aa)) enclose the NR LBD domain.

It belongs to the nuclear hormone receptor family.

The protein localises to the nucleus. In terms of biological role, orphan nuclear receptor. In Caenorhabditis elegans, this protein is Nuclear hormone receptor family member nhr-90 (nhr-90).